Reading from the N-terminus, the 238-residue chain is MGEEAPEEYELGGGEDERVMEWETGLPGADELTPLSQPLVPAGLAAAFRIPPEPGRTLLDVHRASAATVSRLRRASSSSSSSFPAFASKGAGTGADEAESGGGADGGNGNTNNSSSKRARLVWTPQLHKRFVEVVAHLGMKNAVPKTIMQLMNVEGLTRENVASHLQKYRLYVKRMQGLSNEGPSPSDHIFASTPVPHASLHDQVPSPYHPHPHHHSYNNAAYAATVSSYHHYHHANH.

Residues 71–90 (RLRRASSSSSSSFPAFASKG) show a composition bias toward low complexity. The interval 71 to 119 (RLRRASSSSSSSFPAFASKGAGTGADEAESGGGADGGNGNTNNSSSKRA) is disordered. Positions 100-109 (SGGGADGGNG) are enriched in gly residues. A DNA-binding region (myb-like GARP) is located at residues 115–174 (SSKRARLVWTPQLHKRFVEVVAHLGMKNAVPKTIMQLMNVEGLTRENVASHLQKYRLYVK).

The protein localises to the nucleus. Its function is as follows. Transcription factor that is essential for the generation of the circadian clock oscillation. Binds to specific sites on CCA1 promoter leading to CCA1 activation. The protein is Transcription factor PCL1 (PCL1) of Oryza sativa subsp. japonica (Rice).